We begin with the raw amino-acid sequence, 629 residues long: Kelch-like protein 13 (629 aa).

The BTB domain occupies 66-135 (CDVTLVPGDG…IYTAKLSLNM (70 aa)). The 102-residue stretch at 170–271 (CVEVGRIANT…TPQDLINYVQ (102 aa)) folds into the BACK domain. Kelch repeat units lie at residues 315-363 (HLVT…VIGN), 364-415 (FLYV…ALKG), 416-462 (HLYA…VYGG), 464-509 (MYIS…TVGD), 511-561 (LYVI…VFEN), and 562-610 (KIYV…TLTV).

As to quaternary structure, component of the BCR(KLHL9-KLHL13) E3 ubiquitin ligase complex, at least composed of CUL3, KLHL9, KLHL13 and RBX1. Interacts with AURKB.

Its pathway is protein modification; protein ubiquitination. Functionally, substrate-specific adapter of a BCR (BTB-CUL3-RBX1) E3 ubiquitin-protein ligase complex required for mitotic progression and cytokinesis. The BCR(KLHL9-KLHL13) E3 ubiquitin ligase complex mediates the ubiquitination of AURKB and controls the dynamic behavior of AURKB on mitotic chromosomes and thereby coordinates faithful mitotic progression and completion of cytokinesis. The chain is Kelch-like protein 13 (KLHL13) from Gallus gallus (Chicken).